A 254-amino-acid polypeptide reads, in one-letter code: ATP-dependent L-serine kinase SbnI (254 aa).

The active site involves E20. S33 is an ADP binding site. Residue I57 participates in O-phospho-L-serine binding. The ADP site is built by D58, G59, H61, and R62. O-phospho-L-serine-binding residues include G59 and H61. W98 and R229 together coordinate O-phospho-L-serine.

Forms dimers and tetramers in solution. Predominantly forms dimers. Dimerization/oligomerization is not essential for kinase activity.

It carries out the reaction L-serine + ATP = O-phospho-L-serine + ADP + H(+). Its pathway is siderophore biosynthesis. Binds heme and heme binding inhibits DNA binding. In terms of biological role, free serine kinase that uses ATP to phosphorylate L-serine to yield O-phospho-L-serine and ADP. O-phospho-L-serine serves as a substrate for SbnA and is a precursor for staphyloferrin B biosynthesis. Is also a DNA-binding regulatory protein that senses heme to control gene expression for siderophore biosynthesis. Binds to DNA within the sbnC coding region and is required for expression of genes in the sbn operon from sbnD onward. The polypeptide is ATP-dependent L-serine kinase SbnI (Staphylococcus aureus (strain NCTC 8325 / PS 47)).